A 677-amino-acid chain; its full sequence is Methionine--tRNA ligase (677 aa).

Positions proline 15–histidine 25 match the 'HIGH' region motif. The Zn(2+) site is built by cysteine 146, cysteine 149, cysteine 159, and cysteine 162. A 'KMSKS' region motif is present at residues lysine 333–serine 337. ATP is bound at residue lysine 336. The tRNA-binding domain maps to aspartate 575–lysine 677.

This sequence belongs to the class-I aminoacyl-tRNA synthetase family. MetG type 1 subfamily. In terms of assembly, homodimer. Requires Zn(2+) as cofactor.

The protein resides in the cytoplasm. The enzyme catalyses tRNA(Met) + L-methionine + ATP = L-methionyl-tRNA(Met) + AMP + diphosphate. Its function is as follows. Is required not only for elongation of protein synthesis but also for the initiation of all mRNA translation through initiator tRNA(fMet) aminoacylation. The protein is Methionine--tRNA ligase of Escherichia coli O17:K52:H18 (strain UMN026 / ExPEC).